Here is a 436-residue protein sequence, read N- to C-terminus: Nucleolar protein 4-like (436 aa).

The disordered stretch occupies residues 1-184; it reads MSDSTWMSAD…KMNDSEGMDP (184 aa). A compositionally biased stretch (low complexity) spans 41–61; it reads SESGSGNGSSTLNPSTSSSTQ. Position 130 is a phosphoserine (Ser-130). The segment covering 160-169 has biased composition (acidic residues); the sequence is ADDDDDDHDD. Positions 170–184 are enriched in basic and acidic residues; it reads HEDNDKMNDSEGMDP. The residue at position 295 (Ser-295) is a Phosphoserine. The segment covering 351–366 has biased composition (polar residues); it reads QPPASLQTGNHSNGPT. Positions 351–400 are disordered; it reads QPPASLQTGNHSNGPTDLSMKGGASTTSTTPTPTPSSTSTSRPVPTAQLS. Residues 375-396 show a composition bias toward low complexity; that stretch reads STTSTTPTPTPSSTSTSRPVPT.

The polypeptide is Nucleolar protein 4-like (NOL4L) (Pongo abelii (Sumatran orangutan)).